Here is a 1150-residue protein sequence, read N- to C-terminus: Protogenin (1150 aa).

A signal peptide spans 1-35 (MAPPLRPLARLRPPGMLLRALLLLLLLSPLPGVWC). Ig-like domains follow at residues 36-130 (FSEL…AHLA), 135-222 (SAFE…ASLT), 235-322 (PTII…ATLT), and 327-411 (PSFV…ARLT). Over 36–949 (FSELSFVKEP…YYHLDQKSMT (914 aa)) the chain is Extracellular. 4 disulfide bridges follow: Cys-60/Cys-113, Cys-156/Cys-205, Cys-256/Cys-304, and Cys-348/Cys-395. Asn-90 carries an N-linked (GlcNAc...) asparagine glycan. Fibronectin type-III domains lie at 421 to 515 (APYN…TLED), 517 to 613 (PLRP…TPKA), 618 to 717 (APKS…VRDR), 724 to 817 (PPHH…TLPE), and 822 to 917 (PPVG…VLPK). Residue Asn-488 is glycosylated (N-linked (GlcNAc...) asparagine). Residue Asn-630 is glycosylated (N-linked (GlcNAc...) asparagine). A helical membrane pass occupies residues 950 to 970 (GIAVGVGIALTCILICVLILI). The Cytoplasmic portion of the chain corresponds to 971-1150 (YRSKARKSSA…SVISTTPPNL (180 aa)). Disordered stretches follow at residues 981-1002 (SKTA…ASGN) and 1086-1150 (ISDE…PPNL). 2 stretches are compositionally biased toward polar residues: residues 983–1000 (TAQN…SLAS) and 1092–1102 (PSSPGQTTSFS). A compositionally biased stretch (basic and acidic residues) spans 1110-1138 (DTEHSANSEGSHETGDSGRFSHESNDEIH). Positions 1141 to 1150 (SVISTTPPNL) are enriched in polar residues.

This sequence belongs to the immunoglobulin superfamily. DCC family.

The protein localises to the membrane. Functionally, may play a role in anteroposterior axis elongation. This chain is Protogenin, found in Homo sapiens (Human).